The sequence spans 360 residues: C-C chemokine receptor-like 2 (360 aa).

Over 1–42 the chain is Extracellular; that stretch reads MDNYTVAPDDEYDVLILDDYLDNSGPDQVPAPEFLSPQQVLQ. N-linked (GlcNAc...) asparagine glycosylation occurs at Asn3. A helical transmembrane segment spans residues 43-63; that stretch reads FCCAVFAVGLLDNVLAVFILV. The Cytoplasmic portion of the chain corresponds to 64 to 73; sequence KYKGLKNLGN. The helical transmembrane segment at 74 to 94 threads the bilayer; sequence IYFLNLALSNLCFLLPLPFWA. Residues 95-109 are Extracellular-facing; sequence HTAAHGESPGNGTCK. Asn105 carries N-linked (GlcNAc...) asparagine glycosylation. Cys108 and Cys185 form a disulfide bridge. A helical membrane pass occupies residues 110-130; it reads VLVGLHSSGLYSEVFSNILLL. Topologically, residues 131–141 are cytoplasmic; sequence VQGYRVFSQGR. Residues 142–162 form a helical membrane-spanning segment; it reads LASIFTTVSCGIVACILAWAM. Topologically, residues 163-202 are extracellular; it reads ATALSLPESVFYEPRMERQKHKCAFGKPHFLPIEAPLWKY. The helical transmembrane segment at 203–223 threads the bilayer; that stretch reads VLTSKMIILVLAFPLLVFIIC. Residues 224 to 243 are Cytoplasmic-facing; it reads CRQLRRRQSFRERQYDLHKP. A helical membrane pass occupies residues 244-264; the sequence is ALVITGVFLLMWAPYNTVLFL. Residues 265-285 are Extracellular-facing; sequence SAFQEHLSLQDEKSSYHLDAS. Residues 286-307 form a helical membrane-spanning segment; sequence VQVTQLVATTHCCVNPLLYLLL. The Cytoplasmic segment spans residues 308–360; it reads DRKAFMRYLRSLFPRCNDIPYQSSGGYQQAPPREGHGRPIELYSNLHQRQDII.

Belongs to the G-protein coupled receptor 1 family. Expressed in macrophages, astrocytes, in glial cells. Constitutively expressed by mast cells. Detected in bronchial epithelium in OVA-induced airway inflammation. Up-regulated during dendritic cell (DC) maturation.

It localises to the cell membrane. Functionally, receptor for CCL19 and chemerin/RARRES2. Does not appear to be a signaling receptor, but may have a role in modulating chemokine-triggered immune responses by capturing and internalizing CCL19 or by presenting RARRES2 ligand to CMKLR1, a functional signaling receptor. Plays a critical role for the development of Th2 responses. This chain is C-C chemokine receptor-like 2 (Ccrl2), found in Mus musculus (Mouse).